The following is a 392-amino-acid chain: Flavohemoprotein (392 aa).

Positions 1 to 139 (MLNAEQRAII…LADILIGAEE (139 aa)) constitute a Globin domain. His85 lines the heme b pocket. Catalysis depends on charge relay system residues Tyr95 and Glu138. The interval 150–392 (GGWRGTREFR…EFFGPAAALE (243 aa)) is reductase. Positions 153–256 (RGTREFRLVR…FPPAGDFTLA (104 aa)) constitute an FAD-binding FR-type domain. FAD is bound by residues Tyr191 and 205-208 (RNYS). Position 268 to 273 (268 to 273 (GVGITP)) interacts with NADP(+). 384-387 (FFGP) is an FAD binding site.

The protein belongs to the globin family. Two-domain flavohemoproteins subfamily. This sequence in the C-terminal section; belongs to the flavoprotein pyridine nucleotide cytochrome reductase family. Requires heme b as cofactor. It depends on FAD as a cofactor.

It catalyses the reaction 2 nitric oxide + NADPH + 2 O2 = 2 nitrate + NADP(+) + H(+). The catalysed reaction is 2 nitric oxide + NADH + 2 O2 = 2 nitrate + NAD(+) + H(+). In terms of biological role, is involved in NO detoxification in an aerobic process, termed nitric oxide dioxygenase (NOD) reaction that utilizes O(2) and NAD(P)H to convert NO to nitrate, which protects the bacterium from various noxious nitrogen compounds. Therefore, plays a central role in the inducible response to nitrosative stress. This is Flavohemoprotein from Pseudomonas putida (strain ATCC 47054 / DSM 6125 / CFBP 8728 / NCIMB 11950 / KT2440).